Reading from the N-terminus, the 713-residue chain is Nuclear poly(A) polymerase 1 (713 aa).

ATP contacts are provided by residues 91-93, 103-106, aspartate 159, tyrosine 229, and 238-239; these read FGS, ADID, and GI. Residues aspartate 104, aspartate 106, and aspartate 159 each coordinate Mg(2+). The interval 480–555 is disordered; it reads FVFPGGVRPS…TLTDQPRNSK (76 aa). Residues 507–526 are compositionally biased toward low complexity; that stretch reads SSTSSAPAATTTTTEMSSES.

It belongs to the poly(A) polymerase family. As to quaternary structure, monomer. Forms a complex with cleavage and polyadenylation specificity factor (CPSF) subunit PAPS4. Mg(2+) serves as cofactor. It depends on Mn(2+) as a cofactor. Expressed in stems, cotyledons, hypocotyls, radicle, leaves, and, to a lower extent, in roots (including primary and secondary roots as well as root tips) and flowers. In radicle, roots and leaves, mainly present in vascular tissues.

The protein resides in the nucleus. It catalyses the reaction RNA(n) + ATP = RNA(n)-3'-adenine ribonucleotide + diphosphate. Essential protein. Polymerase that creates the 3'-poly(A) tail of mRNA's. Also required for the endoribonucleolytic cleavage reaction at some polyadenylation sites. May acquire specificity through interaction with a cleavage and polyadenylation specificity factor (CPSF) at its C-terminus. In Arabidopsis thaliana (Mouse-ear cress), this protein is Nuclear poly(A) polymerase 1.